A 119-amino-acid chain; its full sequence is UPF0342 protein GTNG_0551 (119 aa).

The protein belongs to the UPF0342 family.

The protein is UPF0342 protein GTNG_0551 of Geobacillus thermodenitrificans (strain NG80-2).